A 202-amino-acid chain; its full sequence is Nucleoid occlusion factor SlmA (202 aa).

In terms of domain architecture, HTH tetR-type spans 14 to 75 (KERQQQVLEV…ALIERIEQTL (62 aa)). The segment at residues 38–57 (TTERLAKAVGVSEGALYRYF) is a DNA-binding region (H-T-H motif).

This sequence belongs to the nucleoid occlusion factor SlmA family. In terms of assembly, homodimer. Interacts with FtsZ.

Its subcellular location is the cytoplasm. The protein resides in the nucleoid. Its function is as follows. Required for nucleoid occlusion (NO) phenomenon, which prevents Z-ring formation and cell division over the nucleoid. Acts as a DNA-associated cell division inhibitor that binds simultaneously chromosomal DNA and FtsZ, and disrupts the assembly of FtsZ polymers. SlmA-DNA-binding sequences (SBS) are dispersed on non-Ter regions of the chromosome, preventing FtsZ polymerization at these regions. The sequence is that of Nucleoid occlusion factor SlmA from Haemophilus ducreyi (strain 35000HP / ATCC 700724).